The primary structure comprises 239 residues: MGQKIHPIGFRLGVSKDWTSKWYAEGTDYANYLEKDFEVREFLRKKLAHASVSKIQIERPRNGAQITIFTARPGIVIGKKGEDIEILKKEVGKILGVATSINIEEIRRPELDSYLVADNIAKQLERRVMFRRAMKRAVASTMRLGAVGVKVSISGRLNGAEIARTEWYREGRVPLHTLRADIDYGLAEAYTTYGVIGVKVWIFKGENLEGLEADTSNTNELSDEKRNRRKPRNANRRKE.

A KH type-2 domain is found at valine 39–arginine 107. The disordered stretch occupies residues threonine 215–glutamate 239. Over residues asparagine 227 to glutamate 239 the composition is skewed to basic residues.

It belongs to the universal ribosomal protein uS3 family. As to quaternary structure, part of the 30S ribosomal subunit. Forms a tight complex with proteins S10 and S14.

In terms of biological role, binds the lower part of the 30S subunit head. Binds mRNA in the 70S ribosome, positioning it for translation. This chain is Small ribosomal subunit protein uS3, found in Dichelobacter nodosus (strain VCS1703A).